Here is a 97-residue protein sequence, read N- to C-terminus: Biogenesis of lysosome-related organelles complex 1 subunit SNN1 (97 aa).

Positions 45–97 (VVRLKQIRNLLKEEQEYYNEEEGLGVERERLEELELRVEKLTQKYKKLLADCV) form a coiled coil.

It belongs to the SNAPIN family. As to quaternary structure, component of the biogenesis of lysosome-related organelles complex-1 (BLOC-1).

The protein localises to the endosome. Its function is as follows. Component of the biogenesis of lysosome-related organelles complex-1 (BLOC-1), a complex involved in endosomal cargo sorting. This is Biogenesis of lysosome-related organelles complex 1 subunit SNN1 (SNN1) from Lachancea thermotolerans (strain ATCC 56472 / CBS 6340 / NRRL Y-8284) (Yeast).